A 160-amino-acid polypeptide reads, in one-letter code: Ribosomal RNA large subunit methyltransferase H (160 aa).

A disordered region spans residues 44–63 (LPESRASNSATRKREEAVQI). Residues Leu76, Gly108, and 127-132 (LGKMTW) contribute to the S-adenosyl-L-methionine site.

Belongs to the RNA methyltransferase RlmH family. Homodimer.

It localises to the cytoplasm. The enzyme catalyses pseudouridine(1915) in 23S rRNA + S-adenosyl-L-methionine = N(3)-methylpseudouridine(1915) in 23S rRNA + S-adenosyl-L-homocysteine + H(+). Specifically methylates the pseudouridine at position 1915 (m3Psi1915) in 23S rRNA. The chain is Ribosomal RNA large subunit methyltransferase H from Allorhizobium ampelinum (strain ATCC BAA-846 / DSM 112012 / S4) (Agrobacterium vitis (strain S4)).